We begin with the raw amino-acid sequence, 427 residues long: 3-phosphoshikimate 1-carboxyvinyltransferase (427 aa).

3-phosphoshikimate-binding residues include Lys20, Ser21, and Arg25. Lys20 provides a ligand contact to phosphoenolpyruvate. Residues Gly92 and Arg120 each contribute to the phosphoenolpyruvate site. Residues Ser166, Gln168, Asp312, and Lys339 each coordinate 3-phosphoshikimate. Phosphoenolpyruvate is bound at residue Gln168. The Proton acceptor role is filled by Asp312. Arg343 and Arg385 together coordinate phosphoenolpyruvate.

This sequence belongs to the EPSP synthase family. Monomer.

The protein localises to the cytoplasm. The enzyme catalyses 3-phosphoshikimate + phosphoenolpyruvate = 5-O-(1-carboxyvinyl)-3-phosphoshikimate + phosphate. It participates in metabolic intermediate biosynthesis; chorismate biosynthesis; chorismate from D-erythrose 4-phosphate and phosphoenolpyruvate: step 6/7. Functionally, catalyzes the transfer of the enolpyruvyl moiety of phosphoenolpyruvate (PEP) to the 5-hydroxyl of shikimate-3-phosphate (S3P) to produce enolpyruvyl shikimate-3-phosphate and inorganic phosphate. The sequence is that of 3-phosphoshikimate 1-carboxyvinyltransferase from Streptococcus mutans serotype c (strain ATCC 700610 / UA159).